Here is a 248-residue protein sequence, read N- to C-terminus: MLLMNLFTIINNDVPTPYNMYFQDSTTPHQEGILELHDNIMFYMLTVLGLVSWMMIIIIKDYKNNPITYKYIKHGQMIEIIWTILPAIILLMIAFPSFILLYLCDEVISPAMTIKVIGLQWYWKYEYSDFINDNGETIEYESYMIPEELLEEGQLRMLDTDTSIVIPVDTHVRFIVTATDVIHDFAVPSLGIKIDTTPGRLSQVSTLIQREGIFYGQCSELCGAQHSAMPIKIETVKLPTFLTWLNEQ.

The signal sequence occupies residues 1–12 (MLLMNLFTIINN). At 13-39 (DVPTPYNMYFQDSTTPHQEGILELHDN) the chain is on the mitochondrial intermembrane side. Residues 40–61 (IMFYMLTVLGLVSWMMIIIIKD) form a helical membrane-spanning segment. At 62–79 (YKNNPITYKYIKHGQMIE) the chain is on the mitochondrial matrix side. The helical transmembrane segment at 80 to 104 (IIWTILPAIILLMIAFPSFILLYLC) threads the bilayer. Residues 105–248 (DEVISPAMTI…PTFLTWLNEQ (144 aa)) are Mitochondrial intermembrane-facing. Positions 183, 218, 220, 222, 226, and 229 each coordinate Cu cation. Residue E220 participates in Mg(2+) binding.

Belongs to the cytochrome c oxidase subunit 2 family. Component of the cytochrome c oxidase (complex IV, CIV), a multisubunit enzyme composed of a catalytic core of 3 subunits and several supernumerary subunits. The complex exists as a monomer or a dimer and forms supercomplexes (SCs) in the inner mitochondrial membrane with ubiquinol-cytochrome c oxidoreductase (cytochrome b-c1 complex, complex III, CIII). Cu cation is required as a cofactor. The signal sequence of COX2 is processed by IMP1.

The protein localises to the mitochondrion inner membrane. It catalyses the reaction 4 Fe(II)-[cytochrome c] + O2 + 8 H(+)(in) = 4 Fe(III)-[cytochrome c] + 2 H2O + 4 H(+)(out). Functionally, component of the cytochrome c oxidase, the last enzyme in the mitochondrial electron transport chain which drives oxidative phosphorylation. The respiratory chain contains 3 multisubunit complexes succinate dehydrogenase (complex II, CII), ubiquinol-cytochrome c oxidoreductase (cytochrome b-c1 complex, complex III, CIII) and cytochrome c oxidase (complex IV, CIV), that cooperate to transfer electrons derived from NADH and succinate to molecular oxygen, creating an electrochemical gradient over the inner membrane that drives transmembrane transport and the ATP synthase. Cytochrome c oxidase is the component of the respiratory chain that catalyzes the reduction of oxygen to water. Electrons originating from reduced cytochrome c in the intermembrane space (IMS) are transferred via the dinuclear copper A center (CU(A)) of subunit 2 and heme A of subunit 1 to the active site in subunit 1, a binuclear center (BNC) formed by heme A3 and copper B (CU(B)). The BNC reduces molecular oxygen to 2 water molecules using 4 electrons from cytochrome c in the IMS and 4 protons from the mitochondrial matrix. The polypeptide is Cytochrome c oxidase subunit 2 (COX2) (Eremothecium gossypii (strain ATCC 10895 / CBS 109.51 / FGSC 9923 / NRRL Y-1056) (Yeast)).